The primary structure comprises 325 residues: SAM pointed domain-containing Ets transcription factor (325 aa).

Disordered stretches follow at residues 27 to 50 and 79 to 100; these read GTEK…PPAT and ARAG…SQAS. The region spanning 119–203 is the PNT domain; that stretch reads EVLKDIETAC…AHLDIWKSAA (85 aa). The segment at residues 239-322 is a DNA-binding region (ETS); the sequence is IHLWQFLKEL…ISQRLVYQFV (84 aa).

Belongs to the ETS family. In terms of assembly, interacts with the DNA-binding domain of the androgen receptor. Interacts with NKX3-1. As to expression, expressed in the accessory glands of sex organs including the prostate, seminal vesicle, coagulating gland in males, the oviduct in females, and in intestines. Expression is epithelial-specific.

The protein resides in the nucleus. May function as an androgen-independent transactivator of the prostate-specific antigen (PSA) promoter. Binds to 5'-GGAT-3' DNA sequences. May play a role in the regulation of the prostate gland and/or prostate cancer development. Acts as a transcriptional activator for SERPINB5 promoter. The chain is SAM pointed domain-containing Ets transcription factor (Spdef) from Mus musculus (Mouse).